We begin with the raw amino-acid sequence, 859 residues long: Protein EFR3 homolog (859 aa).

Disordered stretches follow at residues 638-657 and 697-724; these read DDPLSSTAVNGTIPEGTPRT and RDGNGDSWQREDGQNFDSTDGRESPDGY. Residues 704-722 are compositionally biased toward basic and acidic residues; it reads WQREDGQNFDSTDGRESPD.

The protein belongs to the EFR3 family.

This Caenorhabditis briggsae protein is Protein EFR3 homolog.